A 463-amino-acid chain; its full sequence is Fumarate hydratase class II (463 aa).

Substrate contacts are provided by residues 97–99, Arg-125, 128–131, 138–140, and Thr-186; these read SGT, HPND, and SSN. Residues 121–134 show a composition bias toward basic and acidic residues; that stretch reads RGEGRKVHPNDHVN. A disordered region spans residues 121-142; that stretch reads RGEGRKVHPNDHVNRGQSSNDT. Residue His-187 is the Proton donor/acceptor of the active site. Ser-317 is an active-site residue. Residues Ser-318 and 323–325 each bind substrate; that span reads KVN.

Belongs to the class-II fumarase/aspartase family. Fumarase subfamily. In terms of assembly, homotetramer.

The protein localises to the cytoplasm. It carries out the reaction (S)-malate = fumarate + H2O. Its pathway is carbohydrate metabolism; tricarboxylic acid cycle; (S)-malate from fumarate: step 1/1. In terms of biological role, involved in the TCA cycle. Catalyzes the stereospecific interconversion of fumarate to L-malate. This chain is Fumarate hydratase class II, found in Bordetella bronchiseptica (strain ATCC BAA-588 / NCTC 13252 / RB50) (Alcaligenes bronchisepticus).